The sequence spans 378 residues: Dual-specificity RNA methyltransferase RlmN 2 (378 aa).

The active-site Proton acceptor is glutamate 113. The Radical SAM core domain occupies 119–355 (TEDRRTLCVS…AAYIRRNRGR (237 aa)). A disulfide bond links cysteine 126 and cysteine 361. The [4Fe-4S] cluster site is built by cysteine 133, cysteine 137, and cysteine 140. S-adenosyl-L-methionine is bound by residues 188–189 (GE), serine 220, 242–244 (SLN), and asparagine 318. The active-site S-methylcysteine intermediate is cysteine 361.

Belongs to the radical SAM superfamily. RlmN family. The cofactor is [4Fe-4S] cluster.

The protein localises to the cytoplasm. The catalysed reaction is adenosine(2503) in 23S rRNA + 2 reduced [2Fe-2S]-[ferredoxin] + 2 S-adenosyl-L-methionine = 2-methyladenosine(2503) in 23S rRNA + 5'-deoxyadenosine + L-methionine + 2 oxidized [2Fe-2S]-[ferredoxin] + S-adenosyl-L-homocysteine. It catalyses the reaction adenosine(37) in tRNA + 2 reduced [2Fe-2S]-[ferredoxin] + 2 S-adenosyl-L-methionine = 2-methyladenosine(37) in tRNA + 5'-deoxyadenosine + L-methionine + 2 oxidized [2Fe-2S]-[ferredoxin] + S-adenosyl-L-homocysteine. Specifically methylates position 2 of adenine 2503 in 23S rRNA and position 2 of adenine 37 in tRNAs. m2A2503 modification seems to play a crucial role in the proofreading step occurring at the peptidyl transferase center and thus would serve to optimize ribosomal fidelity. The sequence is that of Dual-specificity RNA methyltransferase RlmN 2 from Myxococcus xanthus (strain DK1622).